Consider the following 195-residue polypeptide: dITP/XTP pyrophosphatase (195 aa).

Position 8-13 (8-13 (SGNAGK)) interacts with substrate. 2 residues coordinate Mg(2+): Glu38 and Asp67. The active-site Proton acceptor is the Asp67. Residues Ser68, 146-149 (FGYD), Lys169, and 174-175 (HR) each bind substrate.

Belongs to the HAM1 NTPase family. Homodimer. It depends on Mg(2+) as a cofactor.

The enzyme catalyses XTP + H2O = XMP + diphosphate + H(+). It carries out the reaction dITP + H2O = dIMP + diphosphate + H(+). It catalyses the reaction ITP + H2O = IMP + diphosphate + H(+). Functionally, pyrophosphatase that catalyzes the hydrolysis of nucleoside triphosphates to their monophosphate derivatives, with a high preference for the non-canonical purine nucleotides XTP (xanthosine triphosphate), dITP (deoxyinosine triphosphate) and ITP. Seems to function as a house-cleaning enzyme that removes non-canonical purine nucleotides from the nucleotide pool, thus preventing their incorporation into DNA/RNA and avoiding chromosomal lesions. This Parasynechococcus marenigrum (strain WH8102) protein is dITP/XTP pyrophosphatase.